Consider the following 390-residue polypeptide: Fluoride export protein 1 (390 aa).

Residues 1-22 (MVAPLVSESQSSSIEETDEQQQ) are disordered. The Cytoplasmic segment spans residues 1–72 (MVAPLVSESQ…RFLDKTQKYY (72 aa)). A helical membrane pass occupies residues 73 to 93 (PVILNIVHGAIWGVLVRKGLM). Residues 94–100 (SLTTYSG) are Extracellular-facing. A helical membrane pass occupies residues 101–121 (SFLSGVIWANFAACVVMGLAI). Topologically, residues 122–143 (DGEVFWIRLLEEKDYPNKGAIP) are cytoplasmic. The helical transmembrane segment at 144–164 (VYTGLTTGFCGTVSSFSSVIL) threads the bilayer. Residues 165–185 (EAFNKAADTDIGVRHHYPNGA) lie on the Extracellular side of the membrane. A helical transmembrane segment spans residues 186–206 (YGIMQFLAVILAQFGLSIMGF). Topologically, residues 207 to 229 (HMGKQFSAVVDNYLPLVTKRIYK) are cytoplasmic. Residues 230-250 (VLELTSMILGVVLVVITCILI) traverse the membrane as a helical segment. Residues 251-256 (GVKKQG) lie on the Extracellular side of the membrane. A helical membrane pass occupies residues 257–279 (SWRSWTFSMLFAPFGALLRYYLS). Over 280–290 (KFLNNKVSNFP) the chain is Cytoplasmic. Residues 291 to 311 (LGTFTANFLGTLLLAVFTLLA) form a helical membrane-spanning segment. Residues 312 to 338 (RGKLPGGKGHIVTNTIALHVLEGLDDG) lie on the Extracellular side of the membrane. The helical transmembrane segment at 339 to 359 (FCGGLTTVSTFVVELFGLKTL) threads the bilayer. Topologically, residues 360-368 (FSYRYGTIS) are cytoplasmic. A helical membrane pass occupies residues 369–389 (ILVCFAGVVLILGSYNWSVGL). A topological domain (extracellular) is located at residue Asp-390.

This sequence belongs to the fluoride channel Fluc/FEX (TC 1.A.43) family.

It localises to the cell membrane. It catalyses the reaction fluoride(in) = fluoride(out). Fluoride channel required for the rapid expulsion of cytoplasmic fluoride. In Candida albicans (strain SC5314 / ATCC MYA-2876) (Yeast), this protein is Fluoride export protein 1.